Reading from the N-terminus, the 557-residue chain is Urocanate hydratase (557 aa).

The disordered stretch occupies residues 1–20 (MSNPRHNEREVRSPRGDELN). NAD(+)-binding positions include 52-53 (GG), Gln-130, 176-178 (GMG), Glu-196, Arg-201, 242-243 (NA), 263-267 (QTSAH), 273-274 (YL), and Tyr-322. Cys-410 is an active-site residue. Gly-492 provides a ligand contact to NAD(+).

This sequence belongs to the urocanase family. The cofactor is NAD(+).

It localises to the cytoplasm. It carries out the reaction 4-imidazolone-5-propanoate = trans-urocanate + H2O. Its pathway is amino-acid degradation; L-histidine degradation into L-glutamate; N-formimidoyl-L-glutamate from L-histidine: step 2/3. Catalyzes the conversion of urocanate to 4-imidazolone-5-propionate. The protein is Urocanate hydratase of Brucella ovis (strain ATCC 25840 / 63/290 / NCTC 10512).